The primary structure comprises 171 residues: uncharacterized protein (171 aa).

Positions 123-171 (CTKRDLRNDPPPAYQPDDPLKDLRKNFEKKEKPTWNDVEKKKNGVFEFH) are disordered. Positions 140 to 171 (DPLKDLRKNFEKKEKPTWNDVEKKKNGVFEFH) are enriched in basic and acidic residues.

This is an uncharacterized protein from Caenorhabditis elegans.